The chain runs to 72 residues: Small proline-rich protein 2A (72 aa).

Residues 1 to 11 are compositionally biased toward low complexity; that stretch reads MSYQQQQCKQP. A disordered region spans residues 1 to 20; the sequence is MSYQQQQCKQPCQPPPVCPT. A run of 3 repeats spans residues 21-29, 30-38, and 39-47. The 3 X 9 AA tandem repeats of P-K-C-P-[EQ]-P-C-P-P stretch occupies residues 21–47; sequence PKCPEPCPPPKCPEPCPPPKCPQPCPP. Positions 42-72 are disordered; sequence PQPCPPQQCQQKYPPVTPSPPCQSKYPPKSK.

The protein belongs to the cornifin (SPRR) family. Post-translationally, forms five pairs of intrachain disulfide bonds. In terms of tissue distribution, expressed in intestine; selectively expressed in goblet cells.

The protein resides in the secreted. It is found in the extracellular space. Its subcellular location is the cytoplasmic vesicle. It localises to the secretory vesicle. Its function is as follows. Gut bactericidal protein that selectively kills Gram-positive bacteria by binding to negatively charged lipids on bacterial membranes, leading to bacterial membrane permeabilization and disruption. Specifically binds lipids bearing negatively charged headgroups, such as phosphatidic acid, phosphatidylserine (PS), cardiolipin (CL), and phosphatidylinositol phosphates, but not to zwitterionic or neutral lipids. Induced by type-2 cytokines in response to helminth infection and is required to protect against helminth-induced bacterial invasion of intestinal tissue. May also be involved in the development of the cornified envelope of squamous epithelia; however, additional evidences are required to confirm this result in vivo. In Homo sapiens (Human), this protein is Small proline-rich protein 2A.